The chain runs to 163 residues: Protein VASCULATURE COMPLEXITY AND CONNECTIVITY (163 aa).

Residues M1 to A27 form the signal peptide. The next 3 membrane-spanning stretches (helical) occupy residues L54 to G74, M95 to G115, and F133 to V153.

This sequence belongs to the DESIGUAL family. As to quaternary structure, interacts with OPS. As to expression, expressed in vascular cells, mostly in hypocotyls, and, to a lower extent, in seedlings, roots, flowers, siliques, developing leaves and inflorescences, but barely in mature leaves and seeds. High levels in leaf primordia.

The protein resides in the endoplasmic reticulum membrane. Functionally, required, together with OPS, for embryo provasculature development and cotyledon vascular complexity and connectivity. Necessary, partially redundantly with DEAL2 and DEAL3, to ensure bilateral symmetry development and early leaf margin patterning, probably via the regulation of auxin and CUC2 distribution. Regulates cell proliferation but not cell expansion. This is Protein VASCULATURE COMPLEXITY AND CONNECTIVITY from Arabidopsis thaliana (Mouse-ear cress).